Reading from the N-terminus, the 370-residue chain is Type II restriction enzyme MjaII (370 aa).

It belongs to the TdeIII type II restriction endonuclease family.

It catalyses the reaction Endonucleolytic cleavage of DNA to give specific double-stranded fragments with terminal 5'-phosphates.. In terms of biological role, a P subtype restriction enzyme that recognizes the double-stranded sequence 5'-GGNCC-3'; the cleavage site is unknown. This is Type II restriction enzyme MjaII (mjaIIR) from Methanocaldococcus jannaschii (strain ATCC 43067 / DSM 2661 / JAL-1 / JCM 10045 / NBRC 100440) (Methanococcus jannaschii).